Consider the following 468-residue polypeptide: 6-phospho-beta-galactosidase (468 aa).

Positions 19, 116, 159, 160, and 297 each coordinate D-galactose 6-phosphate. Residue E160 is the Proton donor of the active site. E375 serves as the catalytic Nucleophile. S428, W429, K435, and Y437 together coordinate D-galactose 6-phosphate.

It belongs to the glycosyl hydrolase 1 family.

The catalysed reaction is a 6-phospho-beta-D-galactoside + H2O = D-galactose 6-phosphate + an alcohol. It functions in the pathway carbohydrate metabolism; lactose degradation; D-galactose 6-phosphate and beta-D-glucose from lactose 6-phosphate: step 1/1. This Streptococcus pyogenes serotype M3 (strain ATCC BAA-595 / MGAS315) protein is 6-phospho-beta-galactosidase.